A 186-amino-acid chain; its full sequence is Elongation factor P (186 aa).

It belongs to the elongation factor P family.

The protein resides in the cytoplasm. Its pathway is protein biosynthesis; polypeptide chain elongation. Involved in peptide bond synthesis. Stimulates efficient translation and peptide-bond synthesis on native or reconstituted 70S ribosomes in vitro. Probably functions indirectly by altering the affinity of the ribosome for aminoacyl-tRNA, thus increasing their reactivity as acceptors for peptidyl transferase. In Cupriavidus necator (strain ATCC 17699 / DSM 428 / KCTC 22496 / NCIMB 10442 / H16 / Stanier 337) (Ralstonia eutropha), this protein is Elongation factor P.